The chain runs to 404 residues: Cysteine desulfurase IscS (404 aa).

Pyridoxal 5'-phosphate contacts are provided by residues alanine 75–threonine 76, asparagine 155, glutamine 183, and serine 203–histidine 205. An N6-(pyridoxal phosphate)lysine modification is found at lysine 206. Residue threonine 243 coordinates pyridoxal 5'-phosphate. Cysteine 328 (cysteine persulfide intermediate) is an active-site residue. Cysteine 328 is a binding site for [2Fe-2S] cluster.

This sequence belongs to the class-V pyridoxal-phosphate-dependent aminotransferase family. NifS/IscS subfamily. In terms of assembly, homodimer. Forms a heterotetramer with IscU, interacts with other sulfur acceptors. Pyridoxal 5'-phosphate serves as cofactor.

It localises to the cytoplasm. It catalyses the reaction (sulfur carrier)-H + L-cysteine = (sulfur carrier)-SH + L-alanine. The protein operates within cofactor biosynthesis; iron-sulfur cluster biosynthesis. Its function is as follows. Master enzyme that delivers sulfur to a number of partners involved in Fe-S cluster assembly, tRNA modification or cofactor biosynthesis. Catalyzes the removal of elemental sulfur atoms from cysteine to produce alanine. Functions as a sulfur delivery protein for Fe-S cluster synthesis onto IscU, an Fe-S scaffold assembly protein, as well as other S acceptor proteins. This Neisseria meningitidis serogroup A / serotype 4A (strain DSM 15465 / Z2491) protein is Cysteine desulfurase IscS.